The primary structure comprises 156 residues: Phosphopantetheine adenylyltransferase (156 aa).

T10 lines the substrate pocket. Residues 10–11 (TF) and H18 each bind ATP. 3 residues coordinate substrate: K42, L74, and R88. ATP is bound by residues 89 to 91 (GIR), E99, and 124 to 130 (WAFISSS).

This sequence belongs to the bacterial CoaD family. As to quaternary structure, homohexamer. It depends on Mg(2+) as a cofactor.

It localises to the cytoplasm. It catalyses the reaction (R)-4'-phosphopantetheine + ATP + H(+) = 3'-dephospho-CoA + diphosphate. The protein operates within cofactor biosynthesis; coenzyme A biosynthesis; CoA from (R)-pantothenate: step 4/5. Its function is as follows. Reversibly transfers an adenylyl group from ATP to 4'-phosphopantetheine, yielding dephospho-CoA (dPCoA) and pyrophosphate. This is Phosphopantetheine adenylyltransferase from Hamiltonella defensa subsp. Acyrthosiphon pisum (strain 5AT).